The chain runs to 948 residues: Probable DNA-directed RNA polymerase (948 aa).

Residues D600, K680, and D853 contribute to the active site.

The protein belongs to the phage and mitochondrial RNA polymerase family.

It localises to the mitochondrion. It catalyses the reaction RNA(n) + a ribonucleoside 5'-triphosphate = RNA(n+1) + diphosphate. DNA-dependent RNA polymerase catalyzes the transcription of DNA into RNA using the four ribonucleoside triphosphates as substrates. In Podospora anserina (Pleurage anserina), this protein is Probable DNA-directed RNA polymerase.